The sequence spans 345 residues: Delta(1)-pyrroline-2-carboxylate reductase (345 aa).

The active-site Charge relay system is Ser-47. His-48 serves as the catalytic Proton donor. A substrate-binding site is contributed by Arg-52. Residue 121-125 (HFSAL) participates in NADP(+) binding. Thr-161 serves as a coordination point for substrate. 179–181 (DFA) lines the NADP(+) pocket. 187–188 (RG) provides a ligand contact to substrate. Catalysis depends on Glu-189, which acts as the Charge relay system. Residues 230–231 (HK) and 305–311 (RLPSGRR) contribute to the NADP(+) site.

This sequence belongs to the LDH2/MDH2 oxidoreductase family. As to quaternary structure, homodimer.

The catalysed reaction is L-proline + NAD(+) = 1-pyrroline-2-carboxylate + NADH + H(+). The enzyme catalyses L-proline + NADP(+) = 1-pyrroline-2-carboxylate + NADPH + H(+). Catalyzes the reduction of Delta(1)-pyrroline-2-carboxylate (Pyr2C) to L-proline, using NADPH as the electron donor. Is likely involved in a degradation pathway that converts trans-3-hydroxy-L-proline (t3LHyp) to L-proline, which would allow A.tumefaciens to grow on t3LHyp as a sole carbon source. This chain is Delta(1)-pyrroline-2-carboxylate reductase, found in Agrobacterium fabrum (strain C58 / ATCC 33970) (Agrobacterium tumefaciens (strain C58)).